The following is a 186-amino-acid chain: CRS2-like protein, chloroplastic (186 aa).

The transit peptide at 1 to 49 directs the protein to the chloroplast; the sequence is MAMTAASVFGSGGCLELLTSSKAMRGKLWTRLAPFISKRHASTSQTSLS. Tyr-73 is a tRNA binding site. The active-site Proton acceptor is the His-78. The tRNA site is built by Tyr-123, Asn-125, and Asn-171.

The protein belongs to the PTH family.

The protein localises to the plastid. The protein resides in the chloroplast. The polypeptide is CRS2-like protein, chloroplastic (Oryza sativa subsp. japonica (Rice)).